A 58-amino-acid polypeptide reads, in one-letter code: Alpha-conotoxin AuIB (58 aa).

Residues 1 to 16 (MFTVFLLVVLATTVVS) form the signal peptide. A propeptide spanning residues 17 to 39 (FTSDRASDGRKDAASGLIALTMK) is cleaved from the precursor. Intrachain disulfides connect Cys-41–Cys-47 and Cys-42–Cys-54. Cys-54 bears the Cysteine amide mark.

In terms of tissue distribution, expressed by the venom duct.

It localises to the secreted. Its function is as follows. Alpha-conotoxins act on postsynaptic membranes, they bind to the nicotinic acetylcholine receptors (nAChR) and thus inhibit them. This toxin blocks mammalian nAChR alpha-3-beta-4/CHRNA3-CHRNB4 subunits. Also exhibits inhibition of D.melanogaster alpha-7/CHRNA7 nAChRs. The sequence is that of Alpha-conotoxin AuIB from Conus aulicus (Princely cone).